The sequence spans 440 residues: Zinc finger MYND domain-containing protein 10 (440 aa).

Cys394, Cys397, Cys405, Cys408, Cys414, Cys418, His426, and Cys430 together coordinate Zn(2+). The MYND-type zinc-finger motif lies at 394-430; that stretch reads CAYCSAEASKRCSRCQKVWYCCRECQVKHWEKHGKTC.

The protein belongs to the ZMYND10 family. In terms of assembly, interacts (via C-terminus) with DNAAF11 (via CS domain); this interaction stabilizes DNAAF11 at the protein level. Interacts (via C-terminus) with DNAL1; this interaction stabilizes DNAL1 at the protein level. Interacts with DNAAF4, HSPA8, IQUB, RUVBL2 and DYNTL5.

The protein localises to the cytoplasm. The protein resides in the cytoskeleton. It is found in the microtubule organizing center. Its subcellular location is the centrosome. It localises to the centriolar satellite. The protein localises to the apical cell membrane. The protein resides in the dynein axonemal particle. Plays a role in axonemal structure organization and motility. Involved in axonemal pre-assembly of inner and outer dynein arms (IDA and ODA, respectively) for proper axoneme building for cilia motility. May act by indirectly regulating transcription of dynein proteins. The sequence is that of Zinc finger MYND domain-containing protein 10 (Zmynd10) from Rattus norvegicus (Rat).